The primary structure comprises 185 residues: Elongation factor P (185 aa).

Belongs to the elongation factor P family.

It is found in the cytoplasm. The protein operates within protein biosynthesis; polypeptide chain elongation. Functionally, involved in peptide bond synthesis. Stimulates efficient translation and peptide-bond synthesis on native or reconstituted 70S ribosomes in vitro. Probably functions indirectly by altering the affinity of the ribosome for aminoacyl-tRNA, thus increasing their reactivity as acceptors for peptidyl transferase. The chain is Elongation factor P from Acetivibrio thermocellus (strain ATCC 27405 / DSM 1237 / JCM 9322 / NBRC 103400 / NCIMB 10682 / NRRL B-4536 / VPI 7372) (Clostridium thermocellum).